A 784-amino-acid polypeptide reads, in one-letter code: Phosphate transporter PHO1 homolog 1 (784 aa).

The Cytoplasmic segment spans residues 1–387 (MVKFTKQFEG…HHRKESHSVT (387 aa)). Residues 2 to 335 (VKFTKQFEGQ…GKQILPIYLK (334 aa)) enclose the SPX domain. Residues 388–408 (FFIGLFTGCFVALLAGYIIVA) traverse the membrane as a helical segment. Residues 409–429 (HLTGMYRQHSANTFYMETAYP) are Extracellular-facing. The chain crosses the membrane as a helical span at residues 430-450 (VLSMFGLLFLHLFLYGCNIFM). At 451-474 (WRKARINYSFIFELGSKNELKYRD) the chain is on the cytoplasmic side. Residues 475-495 (VFLICTASMSAIAGVMFVHLS) form a helical membrane-spanning segment. Residues 496–507 (LLEKGYSFRQVQ) are Extracellular-facing. A helical transmembrane segment spans residues 508–528 (VIPGLLLLGFLLILICPLNIF). Residues 529–654 (YKSSRYRLIS…TKVAYEKERS (126 aa)) are Cytoplasmic-facing. In terms of domain architecture, EXS spans 593–784 (MRVKYYRDLA…LPFREVDEED (192 aa)). The chain crosses the membrane as a helical span at residues 655 to 675 (LGWLCLVVAMSSVATIYQLYW). Over 676–703 (DFVKDWGLLQHNSNNPWLRNQLMLRQKS) the chain is Extracellular. A helical membrane pass occupies residues 704-724 (IYYFSMVLNLVLRLAWLQTVL). Topologically, residues 725 to 784 (HSSFEHVDYRVTGLFLAALEVIRRGQWNFYRLENEHLNNAGKFRAVKTVPLPFREVDEED) are cytoplasmic.

Belongs to the SYG1 (TC 2.A.94) family. Expressed in vascular cylinder of roots, leaves, stems, petals, sepals and filaments. Expressed in receptacle, stigma apex and anther connective tissue.

The protein localises to the cell membrane. In terms of biological role, contributes to the loading of inorganic phosphate (Pi) into the root xylem vessels. This is Phosphate transporter PHO1 homolog 1 (PHO1-H1) from Arabidopsis thaliana (Mouse-ear cress).